The chain runs to 309 residues: 1,2-phenylacetyl-CoA epoxidase, subunit A (309 aa).

Residues Arg-33, Gln-37, 103 to 106, Asn-132, Met-193, 202 to 204, Lys-214, and Asn-218 contribute to the substrate site; these read KYSS and SPN.

As to quaternary structure, forms a stable heterotetramer (dimer of heterodimers) with PaaC. Fe cation is required as a cofactor.

It catalyses the reaction phenylacetyl-CoA + NADPH + O2 + H(+) = 2-(1,2-epoxy-1,2-dihydrophenyl)acetyl-CoA + NADP(+) + H2O. It functions in the pathway aromatic compound metabolism; phenylacetate degradation. In terms of biological role, component of 1,2-phenylacetyl-CoA epoxidase multicomponent enzyme system which catalyzes the reduction of phenylacetyl-CoA (PA-CoA) to form 1,2-epoxyphenylacetyl-CoA. The subunit A is the catalytic subunit involved in the incorporation of one atom of molecular oxygen into phenylacetyl-CoA. In Escherichia coli (strain K12), this protein is 1,2-phenylacetyl-CoA epoxidase, subunit A (paaA).